A 497-amino-acid chain; its full sequence is Aspartyl/glutamyl-tRNA(Asn/Gln) amidotransferase subunit B (497 aa).

The protein belongs to the GatB/GatE family. GatB subfamily. In terms of assembly, heterotrimer of A, B and C subunits.

It carries out the reaction L-glutamyl-tRNA(Gln) + L-glutamine + ATP + H2O = L-glutaminyl-tRNA(Gln) + L-glutamate + ADP + phosphate + H(+). It catalyses the reaction L-aspartyl-tRNA(Asn) + L-glutamine + ATP + H2O = L-asparaginyl-tRNA(Asn) + L-glutamate + ADP + phosphate + 2 H(+). Its function is as follows. Allows the formation of correctly charged Asn-tRNA(Asn) or Gln-tRNA(Gln) through the transamidation of misacylated Asp-tRNA(Asn) or Glu-tRNA(Gln) in organisms which lack either or both of asparaginyl-tRNA or glutaminyl-tRNA synthetases. The reaction takes place in the presence of glutamine and ATP through an activated phospho-Asp-tRNA(Asn) or phospho-Glu-tRNA(Gln). The chain is Aspartyl/glutamyl-tRNA(Asn/Gln) amidotransferase subunit B from Cutibacterium acnes (strain DSM 16379 / KPA171202) (Propionibacterium acnes).